The chain runs to 130 residues: Sirohydrochlorin cobaltochelatase (130 aa).

His-12 (proton acceptor) is an active-site residue. His-12 contributes to the Co(2+) binding site. His-12 contacts Ni(2+). Residues Glu-48 and 73–78 each bind substrate; that span reads LASGVH. A Co(2+)-binding site is contributed by His-78. His-78 contacts Ni(2+).

Belongs to the CbiX family. CbiXS subfamily. In terms of assembly, homotetramer; dimer of dimers.

The catalysed reaction is Co-sirohydrochlorin + 2 H(+) = sirohydrochlorin + Co(2+). The enzyme catalyses Ni-sirohydrochlorin + 2 H(+) = sirohydrochlorin + Ni(2+). It functions in the pathway cofactor biosynthesis; adenosylcobalamin biosynthesis; cob(II)yrinate a,c-diamide from sirohydrochlorin (anaerobic route): step 1/10. Its function is as follows. Catalyzes the insertion of Co(2+) into sirohydrochlorin as part of the anaerobic pathway to cobalamin biosynthesis. Involved in the biosynthesis of the unique nickel-containing tetrapyrrole coenzyme F430, the prosthetic group of methyl-coenzyme M reductase (MCR), which plays a key role in methanogenesis and anaerobic methane oxidation. Catalyzes the insertion of Ni(2+) into sirohydrochlorin to yield Ni-sirohydrochlorin. This is Sirohydrochlorin cobaltochelatase from Methanosarcina barkeri (strain Fusaro / DSM 804).